The following is a 701-amino-acid chain: Ribosomal RNA large subunit methyltransferase K/L (701 aa).

The THUMP domain occupies 43–154; sequence LLYQSLMWSR…KETAHISLDL (112 aa).

Belongs to the methyltransferase superfamily. RlmKL family.

It localises to the cytoplasm. The catalysed reaction is guanosine(2445) in 23S rRNA + S-adenosyl-L-methionine = N(2)-methylguanosine(2445) in 23S rRNA + S-adenosyl-L-homocysteine + H(+). It catalyses the reaction guanosine(2069) in 23S rRNA + S-adenosyl-L-methionine = N(2)-methylguanosine(2069) in 23S rRNA + S-adenosyl-L-homocysteine + H(+). Specifically methylates the guanine in position 2445 (m2G2445) and the guanine in position 2069 (m7G2069) of 23S rRNA. The protein is Ribosomal RNA large subunit methyltransferase K/L of Klebsiella pneumoniae (strain 342).